Here is a 404-residue protein sequence, read N- to C-terminus: Imidazolonepropionase (404 aa).

Positions 73 and 75 each coordinate Fe(3+). Positions 73 and 75 each coordinate Zn(2+). Residues Arg-82, Tyr-145, and His-178 each coordinate 4-imidazolone-5-propanoate. Tyr-145 provides a ligand contact to N-formimidoyl-L-glutamate. Fe(3+) is bound at residue His-243. His-243 contributes to the Zn(2+) binding site. Position 246 (Gln-246) interacts with 4-imidazolone-5-propanoate. Asp-318 serves as a coordination point for Fe(3+). Asp-318 contacts Zn(2+). Residues Asn-320 and Gly-322 each contribute to the N-formimidoyl-L-glutamate site. Ser-323 contributes to the 4-imidazolone-5-propanoate binding site.

This sequence belongs to the metallo-dependent hydrolases superfamily. HutI family. Zn(2+) is required as a cofactor. The cofactor is Fe(3+).

The protein resides in the cytoplasm. The catalysed reaction is 4-imidazolone-5-propanoate + H2O = N-formimidoyl-L-glutamate. It participates in amino-acid degradation; L-histidine degradation into L-glutamate; N-formimidoyl-L-glutamate from L-histidine: step 3/3. Functionally, catalyzes the hydrolytic cleavage of the carbon-nitrogen bond in imidazolone-5-propanoate to yield N-formimidoyl-L-glutamate. It is the third step in the universal histidine degradation pathway. The sequence is that of Imidazolonepropionase from Bradyrhizobium diazoefficiens (strain JCM 10833 / BCRC 13528 / IAM 13628 / NBRC 14792 / USDA 110).